The sequence spans 117 residues: Large ribosomal subunit protein bL20c (117 aa).

Belongs to the bacterial ribosomal protein bL20 family.

It is found in the plastid. It localises to the chloroplast. Functionally, binds directly to 23S ribosomal RNA and is necessary for the in vitro assembly process of the 50S ribosomal subunit. It is not involved in the protein synthesizing functions of that subunit. The protein is Large ribosomal subunit protein bL20c of Thalassiosira pseudonana (Marine diatom).